The chain runs to 107 residues: Anti-adapter protein IraM (107 aa).

Belongs to the IraM/RssC family.

The protein resides in the cytoplasm. Its function is as follows. Inhibits RpoS proteolysis by regulating RssB activity, thereby increasing the stability of the sigma stress factor RpoS during magnesium starvation. The chain is Anti-adapter protein IraM from Escherichia coli (strain 55989 / EAEC).